A 348-amino-acid chain; its full sequence is Putative [LysW]-L-2-aminoadipate/[LysW]-L-glutamate phosphate reductase (348 aa).

NADP(+) is bound at residue 9–12 (SGYV). Cys149 is an active-site residue. An NADP(+)-binding site is contributed by Asn315.

This sequence belongs to the NAGSA dehydrogenase family. Type 1 subfamily. LysY sub-subfamily.

The protein localises to the cytoplasm. The enzyme catalyses [amino-group carrier protein]-C-terminal-N-(1-carboxy-5-oxopentan-1-yl)-L-glutamine + phosphate + NADP(+) = [amino-group carrier protein]-C-terminal-N-(1-carboxy-5-phosphooxy-5-oxopentan-1-yl)-L-glutamine + NADPH + H(+). It catalyses the reaction [amino-group carrier protein]-C-terminal-gamma-(L-glutamyl-5-semialdehyde)-L-glutamate + phosphate + NADP(+) = [amino-group carrier protein]-C-terminal-gamma-(5-phospho-L-glutamyl)-L-glutamate + NADPH + H(+). Its pathway is amino-acid biosynthesis; L-lysine biosynthesis via AAA pathway; L-lysine from L-alpha-aminoadipate (Thermus route): step 3/5. It functions in the pathway amino-acid biosynthesis; L-arginine biosynthesis. In terms of biological role, involved in both the arginine and lysine biosynthetic pathways. This Cenarchaeum symbiosum (strain A) protein is Putative [LysW]-L-2-aminoadipate/[LysW]-L-glutamate phosphate reductase.